Reading from the N-terminus, the 485-residue chain is Phenylalanine--tRNA ligase alpha subunit, cytoplasmic (485 aa).

Residues T318, 360-362, and Y400 each bind L-phenylalanine; that span reads QIE. Residue E402 coordinates Mg(2+). F426 is a binding site for L-phenylalanine.

It belongs to the class-II aminoacyl-tRNA synthetase family. Phe-tRNA synthetase alpha subunit type 2 subfamily. As to quaternary structure, tetramer of two alpha and two beta subunits. Mg(2+) is required as a cofactor.

The protein resides in the cytoplasm. The protein localises to the cytosol. The enzyme catalyses tRNA(Phe) + L-phenylalanine + ATP = L-phenylalanyl-tRNA(Phe) + AMP + diphosphate + H(+). The protein is Phenylalanine--tRNA ligase alpha subunit, cytoplasmic of Arabidopsis thaliana (Mouse-ear cress).